Consider the following 394-residue polypeptide: MYYQNQHQGKNILSSSRMHITSERHPFLRGNSPGDSGLILSTDAKPRLKWTPDLHERFIEAVNQLGGADKATPKTIMKVMGIPGLTLYHLKSHLQKYRLSKNLNGQANNSFNKIGIMTMMEEKTPDADEIQSENLSIGPQPNKNSPIGEALQMQIEVQRRLHEQLEVQRHLQLRIEAQGKYLQSVLEKAQETLGRQNLGAAGIEAAKVQLSELVSKVSAEYPNSSFLEPKELQNLCSQQMQTNYPPDCSLESCLTSSEGTQKNSKMLENNRLGLRTYIGDSTSEQKEIMEEPLFQRMELTWTEGLRGNPYLSTMVSEAEQRISYSERSPGRLSIGVGLHGHKSQHQQGNNEDHKLETRNRKGMDSTTELDLNTHVENYCTTRTKQFDLNGFSWN.

Residues 42–102 (TDAKPRLKWT…HLQKYRLSKN (61 aa)) form the HTH myb-type domain. The H-T-H motif DNA-binding region spans 73-98 (PKTIMKVMGIPGLTLYHLKSHLQKYR). The tract at residues 148–168 (GEALQMQIEVQRRLHEQLEVQ) is coiled coil. Positions 161-166 (LHEQLE) match the LHEQLE motif. Residues 338-363 (LHGHKSQHQQGNNEDHKLETRNRKGM) are disordered. Basic and acidic residues predominate over residues 350-363 (NEDHKLETRNRKGM).

It belongs to the MYB-CC family. Isoform 1: Homodimer. Isoform 3: Does not form homodimer. Expressed in phloem and/or cambium.

Its subcellular location is the nucleus. Functionally, transcriptional activator that may activate the transcription of specific genes involved in nitrogen uptake or assimilation. Acts redundantly with MYR1 as a repressor of flowering and organ elongation under decreased light intensity. Represses gibberellic acid (GA)-dependent responses and affects levels of bioactive GA. This chain is Myb-related protein 2, found in Arabidopsis thaliana (Mouse-ear cress).